Consider the following 147-residue polypeptide: Cyanate hydratase (147 aa).

Catalysis depends on residues Arg-88, Glu-91, and Ser-114.

Belongs to the cyanase family.

It carries out the reaction cyanate + hydrogencarbonate + 3 H(+) = NH4(+) + 2 CO2. Functionally, catalyzes the reaction of cyanate with bicarbonate to produce ammonia and carbon dioxide. The sequence is that of Cyanate hydratase from Thiobacillus denitrificans (strain ATCC 25259 / T1).